A 111-amino-acid polypeptide reads, in one-letter code: SPbeta prophage-derived uncharacterized protein YopW (111 aa).

The sequence is that of SPbeta prophage-derived uncharacterized protein YopW (yopW) from Bacillus subtilis (strain 168).